We begin with the raw amino-acid sequence, 133 residues long: ATP synthase epsilon chain, chloroplastic (133 aa).

This sequence belongs to the ATPase epsilon chain family. As to quaternary structure, F-type ATPases have 2 components, CF(1) - the catalytic core - and CF(0) - the membrane proton channel. CF(1) has five subunits: alpha(3), beta(3), gamma(1), delta(1), epsilon(1). CF(0) has three main subunits: a, b and c.

The protein localises to the plastid. The protein resides in the chloroplast thylakoid membrane. Its function is as follows. Produces ATP from ADP in the presence of a proton gradient across the membrane. The sequence is that of ATP synthase epsilon chain, chloroplastic from Vitis vinifera (Grape).